The following is a 324-amino-acid chain: Olfactory receptor 1L3 (324 aa).

Residues methionine 1 to arginine 25 are Extracellular-facing. Asparagine 5 is a glycosylation site (N-linked (GlcNAc...) asparagine). The chain crosses the membrane as a helical span at residues proline 26–isoleucine 49. The Cytoplasmic segment spans residues histidine 50 to asparagine 57. The helical transmembrane segment at proline 58 to proline 79 threads the bilayer. Over lysine 80–glutamine 100 the chain is Extracellular. Cysteine 97 and cysteine 189 are oxidised to a cystine. The helical transmembrane segment at methionine 101–isoleucine 120 threads the bilayer. At asparagine 121 to arginine 139 the chain is on the cytoplasmic side. The helical transmembrane segment at cysteine 140 to leucine 158 threads the bilayer. At histidine 159–glutamate 196 the chain is on the extracellular side. Residues isoleucine 197–leucine 219 form a helical membrane-spanning segment. Residues arginine 220 to lysine 236 lie on the Cytoplasmic side of the membrane. A helical membrane pass occupies residues alanine 237–tyrosine 259. Over leucine 260–arginine 271 the chain is Extracellular. A helical membrane pass occupies residues isoleucine 272–leucine 291. The Cytoplasmic portion of the chain corresponds to arginine 292–proline 324.

It belongs to the G-protein coupled receptor 1 family.

The protein localises to the cell membrane. Odorant receptor. The protein is Olfactory receptor 1L3 (OR1L3) of Homo sapiens (Human).